Consider the following 56-residue polypeptide: MAVQQNKPTRSKRGMRRSHDALTTSTVSVDKASGETHLRHHITADGFYRGRKVIAK.

The tract at residues 1–34 (MAVQQNKPTRSKRGMRRSHDALTTSTVSVDKASG) is disordered.

It belongs to the bacterial ribosomal protein bL32 family.

The chain is Large ribosomal subunit protein bL32 from Sodalis glossinidius (strain morsitans).